The sequence spans 433 residues: MSDLTDIQEEITRHEQQLVVARQKLKDAERAVEVYPDDVNKNTLQARQQTVSALEDKLADYKRRMADAVSRKKMDTKPTDPTGIEPDDHLKERSSLRYGNVLDVNAIDIEEPSGQTADWYTIGVYVIGFTIPIILKALYMLSTRGRQTVKENKGTRIRFKDDTSFEDINGIRRPKHLYVSMPTAQSTMKAEELTPGRFRTIVCGLFPTQIQVRNIMSPVMGVIGFSFFVKDWPEKIREFMEKECPFIKPEVKPGTPAQEVEFLKRNRVYFMTRQDVLDKNHVADIDKLIDYAASGDPTSPDDIESPNAPWVFACAPDRCPPTCIYVAGMAELGAFFSILQDMRNTIMASKTVGTAEEKLKKKSSFYQSYLRRTQSMGIQLDQRIILLYMLEWGKEMVDHFHLGDDMDPELRGLAQSLIDQKVKEISNQEPLKI.

The interval 1 to 50 (MSDLTDIQEEITRHEQQLVVARQKLKDAERAVEVYPDDVNKNTLQARQQT) is rdRP binding. Homomultimerization stretches follow at residues 1-79 (MSDL…TKPT) and 100-125 (NVLD…IGVY). Residues 1–100 (MSDLTDIQEE…KERSSLRYGN (100 aa)) form a chaperone activity region. The tract at residues 1 to 175 (MSDLTDIQEE…EDINGIRRPK (175 aa)) is viral panhandle binding. A coiled-coil region spans residues 4-71 (LTDIQEEITR…KRRMADAVSR (68 aa)). Over residues 69–78 (VSRKKMDTKP) the composition is skewed to basic and acidic residues. The disordered stretch occupies residues 69–90 (VSRKKMDTKPTDPTGIEPDDHL). Positions 80–248 (DPTGIEPDDH…FMEKECPFIK (169 aa)) are interaction with glycoprotein N. Positions 150 to 175 (KENKGTRIRFKDDTSFEDINGIRRPK) are interaction with host RPS19. Residues 175 to 217 (KHLYVSMPTAQSTMKAEELTPGRFRTIVCGLFPTQIQVRNIMS) are viral RNA-binding. The short motif at 178-181 (YVSM) is the YxxL element. The interval 188-191 (MKAE) is interaction with host UBE2I/UBC9. The interval 377–425 (GIQLDQRIILLYMLEWGKEMVDHFHLGDDMDPELRGLAQSLIDQKVKEI) is homomultimerization. The segment at 377 to 433 (GIQLDQRIILLYMLEWGKEMVDHFHLGDDMDPELRGLAQSLIDQKVKEISNQEPLKI) is interaction with host DAXX.

Belongs to the hantavirus nucleocapsid protein family. In terms of assembly, homotrimer. Homomultimer. Homomultimerizes and binds to viral genomic RNA to form the nucleocapsid. Interacts with host MAP1LC3B; this interaction participates to the protection of Gn from virus-triggered autophagy. Interacts with host SNAP29; this interaction participates to the protection of glycoprotein N from virus-triggered autophagy. Interacts (via N-terminus) with host RPS19; this interaction probably mediates the loading of the 40S ribosomal subunit on viral capped mRNA during N-mediated translation initiation. Interacts with the viral RdRp. Interacts with host SUMO1 (via N-terminus). Interacts with host DAXX. Interacts with the viral glycoprotein N (via C-terminus). Interacts with the viral glycoprotein C (via C-terminus).

Its subcellular location is the virion. The protein resides in the host cytoplasm. It is found in the host perinuclear region. It localises to the host Golgi apparatus. The protein localises to the host cis-Golgi network. Its function is as follows. Encapsidates the genome protecting it from nucleases. The encapsidated genomic RNA is termed the nucleocapsid (NC) and serves as template for transcription and replication. The nucleocapsid has a left-handed helical structure. As a trimer, specifically binds and acts as a chaperone to unwind the panhandle structure formed by the viral RNA (vRNA) termini. Involved in the transcription and replication initiation of vRNA by mediating primer annealing. Plays a role in cap snatching by sequestering capped RNAs in P bodies for use by the viral RdRp during transcription initiation. Substitutes for the cellular cap-binding complex (eIF4F) to preferentially facilitate the translation of capped mRNAs. Initiates the translation by specifically binding to the cap and 40S ribosomal subunit. Prevents the viral glycoprotein N (Gn) from autophagy-dependent breakdown maybe by blocking autophagosome formation. Inhibits host EIF2AK2/PKR dimerization to prevent PKR-induced translational shutdown in cells and thus the activation of the antiviral state. Also displays sequence-unspecific DNA endonuclease activity. In Puumala virus (strain P360), this protein is Nucleoprotein (N).